The following is a 351-amino-acid chain: MAAAPDRQKALDAALAQIDKQFGKGSVMRLGDEVRAPIEVIPTGSIALDVALGIGGLPRGRVVEIYGPESSGKTTVALHAVANAQRQGGIAAFIDAEHALDPEYAAKLGVDTDALLVSQPDTGEQALEIMDMLIGSGSLDVIVIDSVAALVPRAEIEGDMGDSHVGLQARLMSQALRKITGRLSQTKTTAIFINQLREKIGVFFGSPETTTGGKALKFYASIRIDVRRIQTLKEGADSVGNRTKAKIVKNKMAPPFKIAEFDIIYGQGISREGGIIDMGVEHGLIKKSGSWFTYDGDQLGQGMENSRRFLRDNPELAAELERLIKEKLGVGVKPAEAEKEASPKLKAVDGF.

Residue 67–74 (GPESSGKT) coordinates ATP.

This sequence belongs to the RecA family.

The protein resides in the cytoplasm. Can catalyze the hydrolysis of ATP in the presence of single-stranded DNA, the ATP-dependent uptake of single-stranded DNA by duplex DNA, and the ATP-dependent hybridization of homologous single-stranded DNAs. It interacts with LexA causing its activation and leading to its autocatalytic cleavage. This chain is Protein RecA, found in Arthrobacter sp. (strain FB24).